The following is a 447-amino-acid chain: uncharacterized protein (447 aa).

The protein localises to the mitochondrion. This is an uncharacterized protein from Dictyostelium discoideum (Social amoeba).